A 335-amino-acid polypeptide reads, in one-letter code: Ketol-acid reductoisomerase (NADP(+)) 2 (335 aa).

Residues 1-180 (MKTYYEKDAN…GCTRAGVIET (180 aa)) form the KARI N-terminal Rossmann domain. Residues 24 to 27 (YGSQ), arginine 47, serine 51, and 81 to 84 (DEQQ) each bind NADP(+). The active site involves histidine 106. Residue glycine 132 participates in NADP(+) binding. The KARI C-terminal knotted domain occupies 181 to 326 (TFQEETETDL…AELREMMSWI (146 aa)). Residues aspartate 189, glutamate 193, glutamate 225, and glutamate 229 each coordinate Mg(2+). Residue serine 250 participates in substrate binding.

The protein belongs to the ketol-acid reductoisomerase family. Requires Mg(2+) as cofactor.

It carries out the reaction (2R)-2,3-dihydroxy-3-methylbutanoate + NADP(+) = (2S)-2-acetolactate + NADPH + H(+). It catalyses the reaction (2R,3R)-2,3-dihydroxy-3-methylpentanoate + NADP(+) = (S)-2-ethyl-2-hydroxy-3-oxobutanoate + NADPH + H(+). Its pathway is amino-acid biosynthesis; L-isoleucine biosynthesis; L-isoleucine from 2-oxobutanoate: step 2/4. It participates in amino-acid biosynthesis; L-valine biosynthesis; L-valine from pyruvate: step 2/4. Involved in the biosynthesis of branched-chain amino acids (BCAA). Catalyzes an alkyl-migration followed by a ketol-acid reduction of (S)-2-acetolactate (S2AL) to yield (R)-2,3-dihydroxy-isovalerate. In the isomerase reaction, S2AL is rearranged via a Mg-dependent methyl migration to produce 3-hydroxy-3-methyl-2-ketobutyrate (HMKB). In the reductase reaction, this 2-ketoacid undergoes a metal-dependent reduction by NADPH to yield (R)-2,3-dihydroxy-isovalerate. In Bacillus cereus (strain ATCC 10987 / NRS 248), this protein is Ketol-acid reductoisomerase (NADP(+)) 2.